A 139-amino-acid polypeptide reads, in one-letter code: Putative nickel-responsive regulator (139 aa).

The Ni(2+) site is built by histidine 79, histidine 90, histidine 92, and cysteine 98.

This sequence belongs to the transcriptional regulatory CopG/NikR family. Ni(2+) serves as cofactor.

In terms of biological role, transcriptional regulator. The polypeptide is Putative nickel-responsive regulator (Trichlorobacter lovleyi (strain ATCC BAA-1151 / DSM 17278 / SZ) (Geobacter lovleyi)).